Reading from the N-terminus, the 283-residue chain is Beta-glucoside operon antiterminator (283 aa).

2 PRD domains span residues 65 to 170 (RIPL…SHMP) and 171 to 280 (EVMR…LQEQ).

The protein belongs to the transcriptional antiterminator BglG family. In terms of processing, phosphorylated and inactivated by ArbF (EII-Bgl). The degree of phosphorylation is dependent on the presence or absence of beta-glucosides which act as inducers of the operon expression. Addition of inducer result in the rapid dephosphorylation of ArbG.

Its function is as follows. Mediates the positive regulation of the beta-glucoside (arb) operon by functioning as a transcriptional antiterminator. This is an RNA-binding protein that recognizes a specific sequence located just upstream of two termination sites within the operon. In Dickeya chrysanthemi (Pectobacterium chrysanthemi), this protein is Beta-glucoside operon antiterminator (arbG).